Here is a 126-residue protein sequence, read N- to C-terminus: Fluoride-specific ion channel FluC (126 aa).

4 helical membrane-spanning segments follow: residues Phe-4 to Ile-24, Gly-35 to Met-55, Ile-71 to Val-91, and Leu-104 to Met-124. The Na(+) site is built by Gly-78 and Thr-81.

It belongs to the fluoride channel Fluc/FEX (TC 1.A.43) family.

The protein localises to the cell inner membrane. It carries out the reaction fluoride(in) = fluoride(out). Its activity is regulated as follows. Na(+) is not transported, but it plays an essential structural role and its presence is essential for fluoride channel function. In terms of biological role, fluoride-specific ion channel. Important for reducing fluoride concentration in the cell, thus reducing its toxicity. This Aliivibrio salmonicida (strain LFI1238) (Vibrio salmonicida (strain LFI1238)) protein is Fluoride-specific ion channel FluC.